The sequence spans 280 residues: 3-methyl-2-oxobutanoate hydroxymethyltransferase (280 aa).

Residues Asp61 and Asp100 each contribute to the Mg(2+) site. 3-methyl-2-oxobutanoate is bound by residues 61-62, Asp100, and Lys130; that span reads DS. Residue Glu132 coordinates Mg(2+). Glu198 (proton acceptor) is an active-site residue.

The protein belongs to the PanB family. Homodecamer; pentamer of dimers. The cofactor is Mg(2+).

It localises to the cytoplasm. The enzyme catalyses 3-methyl-2-oxobutanoate + (6R)-5,10-methylene-5,6,7,8-tetrahydrofolate + H2O = 2-dehydropantoate + (6S)-5,6,7,8-tetrahydrofolate. It participates in cofactor biosynthesis; (R)-pantothenate biosynthesis; (R)-pantoate from 3-methyl-2-oxobutanoate: step 1/2. In terms of biological role, catalyzes the reversible reaction in which hydroxymethyl group from 5,10-methylenetetrahydrofolate is transferred onto alpha-ketoisovalerate to form ketopantoate. This Mycolicibacterium vanbaalenii (strain DSM 7251 / JCM 13017 / BCRC 16820 / KCTC 9966 / NRRL B-24157 / PYR-1) (Mycobacterium vanbaalenii) protein is 3-methyl-2-oxobutanoate hydroxymethyltransferase.